The sequence spans 151 residues: UPF0208 membrane protein NT01EI_2692 (151 aa).

2 helical membrane-spanning segments follow: residues 46–65 (FAIRFMPPIAMFTLCWQIAL) and 69–91 (LGPAIATALFACSLPMQGLWWLG).

The protein belongs to the UPF0208 family.

The protein resides in the cell inner membrane. In Edwardsiella ictaluri (strain 93-146), this protein is UPF0208 membrane protein NT01EI_2692.